We begin with the raw amino-acid sequence, 243 residues long: Urease accessory protein UreF 2 (243 aa).

This sequence belongs to the UreF family. UreD, UreF and UreG form a complex that acts as a GTP-hydrolysis-dependent molecular chaperone, activating the urease apoprotein by helping to assemble the nickel containing metallocenter of UreC. The UreE protein probably delivers the nickel.

The protein resides in the cytoplasm. Its function is as follows. Required for maturation of urease via the functional incorporation of the urease nickel metallocenter. This Brucella suis (strain ATCC 23445 / NCTC 10510) protein is Urease accessory protein UreF 2.